Here is a 1289-residue protein sequence, read N- to C-terminus: Ethylene-insensitive protein 2.1 (1289 aa).

The next 5 helical transmembrane spans lie at 18–38, 48–68, 96–116, 128–148, and 155–175; these read LLPA…PGKW, FGFD…LCQY, FLGV…ILGI, LSTC…FATL, and SFLC…GVLI. The N-linked (GlcNAc...) asparagine glycan is linked to asparagine 185. The chain crosses the membrane as a helical span at residues 199 to 219; sequence LMSLLGASIMPHNFFLHSAIV. Asparagine 227 is a glycosylation site (N-linked (GlcNAc...) asparagine). The next 7 membrane-spanning stretches (helical) occupy residues 235–255, 260–280, 288–308, 335–355, 356–376, 393–413, and 439–459; these read LNHF…NFVL, ANVF…MSLM, VAPF…AFSW, IIAV…GIYQ, LLIL…IPLF, FLEF…IIFV, and YIVL…LAAT. N-linked (GlcNAc...) asparagine glycosylation is present at asparagine 521. The tract at residues 611–659 is disordered; the sequence is LHTEKEDDEGDNWEPEDSSKGVPGSTLSLTSDGPGSFRSLSGKSDAGGN. Residues 616 to 626 show a composition bias toward acidic residues; the sequence is EDDEGDNWEPE. Polar residues predominate over residues 635 to 652; it reads STLSLTSDGPGSFRSLSG. 2 positions are modified to phosphoserine: serine 646 and serine 663. Asparagine 745 carries N-linked (GlcNAc...) asparagine glycosylation. The segment at 792–816 is disordered; it reads SIADSSERRYSGVRTPPSSDGWDNQ. The span at 807–816 shows a compositional bias: polar residues; it reads PPSSDGWDNQ. Threonine 819 is subject to Phosphothreonine. Phosphoserine is present on serine 923. Asparagine 1025 carries N-linked (GlcNAc...) asparagine glycosylation. A disordered region spans residues 1208–1227; sequence HRSSPPASNGMLPPASKPGR. Positions 1274–1281 match the Nuclear localization signal motif; the sequence is LKRYKRRL.

Belongs to the NRAMP (TC 2.A.55) family.

The protein localises to the endoplasmic reticulum membrane. It is found in the nucleus. The protein resides in the cytoplasm. Its function is as follows. Central factor in signaling pathways regulated by ethylene (ET) and involved in various processes including development, plant defense, senescence, nucleotide sugar flux, and tropisms. In terms of biological role, trafficking signal inducing ethylene response. The nuclear localization is both necessary and sufficient to activate EIN3-mediated transcription and ethylene responses. The protein is Ethylene-insensitive protein 2.1 of Populus trichocarpa (Western balsam poplar).